Here is a 599-residue protein sequence, read N- to C-terminus: Sulfite reductase [NADPH] flavoprotein alpha-component (599 aa).

A Flavodoxin-like domain is found at 64-202 (ITIISASQTG…AASEWRARVV (139 aa)). FMN-binding positions include 70–75 (SQTGNA), 117–120 (STQG), and 153–162 (LGDSSYEFFC). The region spanning 234–448 (DAPLVASLSV…IEHNDNFRLP (215 aa)) is the FAD-binding FR-type domain. FAD is bound by residues threonine 322, alanine 356, 386–389 (RLYS), 404–406 (TVG), tyrosine 410, and 419–422 (GGAS). NADP(+) is bound by residues 519–520 (SR), 525–529 (KVYVQ), and aspartate 561. FAD is bound at residue tyrosine 599.

Belongs to the NADPH-dependent sulphite reductase flavoprotein subunit CysJ family. The protein in the N-terminal section; belongs to the flavodoxin family. It in the C-terminal section; belongs to the flavoprotein pyridine nucleotide cytochrome reductase family. Alpha(8)-beta(8). The alpha component is a flavoprotein, the beta component is a hemoprotein. FAD serves as cofactor. Requires FMN as cofactor.

The enzyme catalyses hydrogen sulfide + 3 NADP(+) + 3 H2O = sulfite + 3 NADPH + 4 H(+). Its pathway is sulfur metabolism; hydrogen sulfide biosynthesis; hydrogen sulfide from sulfite (NADPH route): step 1/1. In terms of biological role, component of the sulfite reductase complex that catalyzes the 6-electron reduction of sulfite to sulfide. This is one of several activities required for the biosynthesis of L-cysteine from sulfate. The flavoprotein component catalyzes the electron flow from NADPH -&gt; FAD -&gt; FMN to the hemoprotein component. The protein is Sulfite reductase [NADPH] flavoprotein alpha-component of Escherichia coli (strain K12).